Reading from the N-terminus, the 372-residue chain is Ciliary neurotrophic factor receptor subunit alpha (372 aa).

The N-terminal stretch at 1–22 (MAAPVPWACCAVLAAAAAVVYA) is a signal peptide. The region spanning 27-104 (PQEAPHVQYE…WHLRHQVLLH (78 aa)) is the Ig-like C2-type domain. A disulfide bridge links Cys-46 with Cys-89. Asn-60, Asn-70, Asn-142, and Asn-190 each carry an N-linked (GlcNAc...) asparagine glycan. 2 consecutive Fibronectin type-III domains span residues 108–205 (PPRE…VKPD) and 206–306 (PPEN…TEEP). The WSXWS motif motif lies at 290-294 (WSDWS). The segment at 301–340 (PWTEEPRHLTTEAQAPETTTSTTSSLAPPPTTKICDPGEL) is disordered. Positions 311 to 326 (TEAQAPETTTSTTSSL) are enriched in low complexity. Ser-342 carries the GPI-anchor amidated serine lipid modification. Positions 343–372 (GGGPSAPFLIHVPVTLALAAAAATANSLLI) are cleaved as a propeptide — removed in mature form.

This sequence belongs to the type I cytokine receptor family. Type 3 subfamily. Forms a heterotrimer with LIFR and IL6ST. Interacts with heterodimeric neurotropic cytokine composed of CLCF1/CLC and CRLF1/CLF-1. Either alone or in complex with the heterodimer CLCF1-CRLF1 interacts with SORL1; this interaction may promote internalization and lysosomal degradation. Expressed in retina, brain, spleen, lung, liver and kidney. In the retina it is highly expressed by photoreceptors, but also found in the RPE, inner nuclear layer and ganglion cells.

It localises to the cell membrane. In terms of biological role, binds to CNTF. The alpha subunit provides the receptor specificity. The chain is Ciliary neurotrophic factor receptor subunit alpha (CNTFR) from Canis lupus familiaris (Dog).